The sequence spans 422 residues: Steroid hormone receptor ERR1 (422 aa).

The interval 1-67 (MSSQVVGIEP…GAGPGEQGGG (67 aa)) is disordered. Phosphoserine occurs at positions 19 and 22. A compositionally biased stretch (gly residues) spans 58 to 67 (GAGPGEQGGG). Positions 76–151 (KRLCLVCGDV…VGMLKEGVRL (76 aa)) form a DNA-binding region, nuclear receptor. NR C4-type zinc fingers lie at residues 79–99 (CLVC…CEAC) and 115–134 (CPAS…CQAC). An N6-acetyllysine; by PCAF/KAT2B mark is found at Lys129, Lys138, Lys160, and Lys162. Glycyl lysine isopeptide (Lys-Gly) (interchain with G-Cter in SUMO2) cross-links involve residues Lys189 and Lys402. Residues 192-420 (PVNALVSHLL…KLFLEMLEAM (229 aa)) enclose the NR LBD domain.

It belongs to the nuclear hormone receptor family. NR3 subfamily. Binds DNA as a monomer or a homodimer. Interacts (via the AF2 domain) with coactivator PPARGC1A (via the L3 motif); the interaction greatly enhances transcriptional activity of genes involved in energy metabolism. Interacts with PIAS4; the interaction enhances sumoylation. Interacts with MAPK15; promotes re-localization of ESRRA to the cytoplasm through a XPO1-dependent mechanism then inhibits ESRRA transcriptional activity. Phosphorylation on Ser-19 enhances sumoylation on Lys-14 increasing repression of transcriptional activity. Post-translationally, sumoylated with SUMO2. Main site is Lys-14 which is enhanced by phosphorylation on Ser-19, cofactor activation, and by interaction with PIAS4. Sumoylation enhances repression of transcriptional activity, but has no effect on subcellular location nor on DNA binding. In terms of processing, reversibly acetylated. Acetylation by PCAF/KAT2 at Lys-129, Lys-138, Lys-160 and Lys-162 and PCAF/KAT2 decreases transcriptional activity probably by inhibiting DNA-binding activity; deacetylation involves SIRT1 and HDAC8 and increases DNA-binding.

The protein resides in the nucleus. The protein localises to the cytoplasm. Its function is as follows. Binds to an ERR-alpha response element (ERRE) containing a single consensus half-site, 5'-TNAAGGTCA-3'. Can bind to the medium-chain acyl coenzyme A dehydrogenase (MCAD) response element NRRE-1 and may act as an important regulator of MCAD promoter. May function as a modulator of the estrogen signaling pathway in the uterus. Induces the expression of PERM1 in the skeletal muscle. This is Steroid hormone receptor ERR1 (ESRRA) from Canis lupus familiaris (Dog).